Consider the following 163-residue polypeptide: ATP synthase subunit b 1 (163 aa).

A helical membrane pass occupies residues 7-27 (PETWVAIAFVILMGLFAYLGV).

The protein belongs to the ATPase B chain family. F-type ATPases have 2 components, F(1) - the catalytic core - and F(0) - the membrane proton channel. F(1) has five subunits: alpha(3), beta(3), gamma(1), delta(1), epsilon(1). F(0) has three main subunits: a(1), b(2) and c(10-14). The alpha and beta chains form an alternating ring which encloses part of the gamma chain. F(1) is attached to F(0) by a central stalk formed by the gamma and epsilon chains, while a peripheral stalk is formed by the delta and b chains.

It is found in the cell inner membrane. F(1)F(0) ATP synthase produces ATP from ADP in the presence of a proton or sodium gradient. F-type ATPases consist of two structural domains, F(1) containing the extramembraneous catalytic core and F(0) containing the membrane proton channel, linked together by a central stalk and a peripheral stalk. During catalysis, ATP synthesis in the catalytic domain of F(1) is coupled via a rotary mechanism of the central stalk subunits to proton translocation. Functionally, component of the F(0) channel, it forms part of the peripheral stalk, linking F(1) to F(0). The protein is ATP synthase subunit b 1 of Bradyrhizobium sp. (strain BTAi1 / ATCC BAA-1182).